We begin with the raw amino-acid sequence, 1678 residues long: MPPGVRQLTVLGKFKPFGLIAEATDGKSPDDSYQYFLFDPELTGERDDADGNDANFSRQREHELFIRDNCNVRKGYALVEANFIGYWYNACWSNLGRGTEAFLCVLQIACLTIYNTSGEVVSVPLMRTVKSIWPLPCGLLLEQAGEVNPPSHVPFSPVSPILGSREMLRQRKEVGNSSPQNFHSPVAHDLISKRDMPCMSSHLILRDPLEEPGPTYVEERGKLTIMKDYDERTIWTSDRLPLMTSYNKGKMQHSVWAAEFIESNLEASASCSSGIVPDAVLSKRVSFRRIWQAKGAKKAASKVFLATDNSVPVICFLILEQKKLLSVGLQTVEINNEILFDVKPDISWSVSAIAAAPVVVTRSQVKIGLLPHLDIIVLSPENDLFLYSGKQCLCRYVLPSWLGESIGSGDGESAKTDSGFRNLKITGLSDAVLGSINLSVNHSQIFRCALTGKPSSSLANDCIAAIAEGLRSDLYSLFLSLLWGDGHSDLQGSSIHFEWEALCNIFLEICQKPTVVHRKQPKTASESSWEFLLISKFHKTYSRFHNGITSINRLDLEGIVPFDSKICSEETLGSSCELMVQSLDCLHAVYESLKMDNLRKQDLHHLAVLLCNIAKFLDEKCYLDYYIRDFPRLSTTIGACTTLSSSRKPPNLFRWLENCLRRGCLSTNFDDLPDLIRRDGCSIVSWARKVVSFYSVLFGDKPEGRTLSSGVPCNIAPGSYSCNEELTILAMAGERFGLHQLDLLPSGVSLPLRHALDSCRESPPADWPAIAYVLLGREDMALSVFRNFSSSKEFEMQSNTSLISMSIPYMLHLHPVIVPSSESIGLENTKIEDTNSVDGSVIDGMEHIFNSYTQLRYGRDLRLNEVRRLLCSARPVVVQTAANPTISDQEQQQAFTVPKLVLAGRLPSQQNAIVNLDPNIRNIQELKTWPEFHNAVAAGLRLAPLQGKVSRTWIRYNKPGEPNAVHAGLLFGLGLQGYLHVLNLSDIYQYFTQDHESTTVGLMLGLAASYRGTMQPDIAKALFFHVPARYQASYTEFEIPTLLQSAALVSVGMLFEGSAHQQTMQLLLGEIGRRSAGDNVLEREGYAVSAGFSLGLVALGRGGDALGSMDSLVNRLLLYLGAKEERSILVPSLEDHRSAAQITDGSTSNVDITAPGAIIALTLMYLKTESEVIFSKLSIPQTHYDLECVRPDFIMLRVIARNLIMWSRICPTCDWIQSQVPEVVKNGISQLRDDMDNMYEVDVEALVQAYVNIVAGACISLGLRFAGTRDGNARDLLNSYALYLLNEIKPLSATPGNAFPRGISKFVDRGTLEMCLYLIIISLSVVMAGSGDLQVFRLLRFLRSRNSADGHANYGTQMAVSLATGFLFLGGGMRTFSTNNGSLAMLLITLYPRLPSGPNDNRCHLQAFRHLYVLATEARWLQTIDVDSGLPVYAPLEVTVKETKLYSETKFCEITPCILPERAILKRICVCGPRYWPQQIELVFGLRTLGESNLIANSHRELDSDSVDHLVSTFSSDPSLIAFAQLCCDKSWNNSFDFLILDLILWSQVALAYNEAVSTGRLASSGGFVQSIFLASLRKRCEEVLNCSTELKINLRNYLTSEAWPYDKNSKLQKDIIILSWYLKWFNVPSPSIIKAAVEKIKSKSKNSTSAIPLLRLLLPNTHISVIGEIDRVFFPSN.

4 PC repeats span residues 1089–1116 (SAGF…VNRL), 1156–1194 (GAII…PDFI), 1256–1293 (GACI…PLSA), and 1320–1354 (IISL…HANY).

Belongs to the APC1 family. In terms of assembly, the APC/C is composed of at least 10 subunits.

Its subcellular location is the nucleus. It functions in the pathway protein modification; protein ubiquitination. Component of the anaphase promoting complex/cyclosome (APC/C), a cell cycle-regulated E3 ubiquitin-protein ligase complex that controls progression through mitosis and the G1 phase of the cell cycle. The APC/C complex controls several key steps in the cell cycle by mediating ubiquitination and subsequent degradation of target proteins such as cyclins. The APC/C complex is required for the female gametophyte development and is involved in several aspect of development by controlling cell division and cell elongation. Involved in the control of endoreduplication. The chain is Anaphase-promoting complex subunit 1 (APC1) from Arabidopsis thaliana (Mouse-ear cress).